The primary structure comprises 466 residues: Coagulation factor VII (466 aa).

Residues 1–20 (MVSQALRLLCLLLGLQGCLA) form the signal peptide. Positions 21–60 (AGGVAKASGGETRDMPWKPGPHRVFVTQEEAHGVLHRRRR) are excised as a propeptide. The region spanning 61–105 (ANAFLEELRPGSLERECKEEQCSFEEAREIFKDAERTKLFWISYS) is the Gla domain. E66, E67, E74, E76, E79, E80, E85, E86, E89, and E95 each carry 4-carboxyglutamate. Residues C77 and C82 are joined by a disulfide bond. The 37-residue stretch at 106–142 (DGDQCASSPCQNGGSCKDQLQSYICFCLPAFEGRNCE) folds into the EGF-like 1; calcium-binding domain. Disulfide bonds link C110-C121, C115-C130, C132-C141, C151-C162, C158-C172, C174-C187, C195-C322, C219-C224, C238-C254, and C370-C389. O-linked (Glc...) serine; alternate glycosylation occurs at S112. A glycan (O-linked (Xyl...) serine; alternate) is linked at S112. S120 carries O-linked (Fuc) serine glycosylation. D123 carries the post-translational modification (3R)-3-hydroxyaspartate. The EGF-like 2 domain occupies 147–188 (DQLICVNENGGCEQYCSDHTGTKRSCRCHEGYSLLADGVSCT). N205 carries an N-linked (GlcNAc...) asparagine glycan. Residues 213-452 (IVGGKVCPKG…YIEWLQKLMR (240 aa)) form the Peptidase S1 domain. Residues H253 and D302 each act as charge relay system in the active site. Residue N382 is glycosylated (N-linked (GlcNAc...) asparagine). D398 contributes to the substrate binding site. Residues C400 and C428 are joined by a disulfide bond. The Charge relay system role is filled by S404.

The protein belongs to the peptidase S1 family. As to quaternary structure, heterodimer of a light chain and a heavy chain linked by a disulfide bond. Interacts (activated) with iripin-8, a serine protease inhibitor from Ixodes ricinus saliva. The vitamin K-dependent, enzymatic carboxylation of some glutamate residues allows the modified protein to bind calcium. Post-translationally, the iron and 2-oxoglutarate dependent 3-hydroxylation of aspartate and asparagine is (R) stereospecific within EGF domains. In terms of processing, O- and N-glycosylated. N-glycosylation at Asn-205 occurs cotranslationally and is mediated by STT3A-containing complexes, while glycosylation at Asn-382 is post-translational and is mediated STT3B-containing complexes before folding. O-fucosylated by POFUT1 on a conserved serine or threonine residue found in the consensus sequence C2-X(4,5)-[S/T]-C3 of EGF domains, where C2 and C3 are the second and third conserved cysteines. Can be either O-glucosylated or O-xylosylated at Ser-112 by POGLUT1 in vitro. As to expression, plasma.

Its subcellular location is the secreted. The enzyme catalyses Selective cleavage of Arg-|-Ile bond in factor X to form factor Xa.. Initiates the extrinsic pathway of blood coagulation. Serine protease that circulates in the blood in a zymogen form. Factor VII is converted to factor VIIa by factor Xa, factor XIIa, factor IXa, or thrombin by minor proteolysis. In the presence of tissue factor and calcium ions, factor VIIa then converts factor X to factor Xa by limited proteolysis. Factor VIIa also converts factor IX to factor IXa in the presence of tissue factor and calcium. The polypeptide is Coagulation factor VII (F7) (Homo sapiens (Human)).